Reading from the N-terminus, the 105-residue chain is Protein U4 (105 aa).

Residues phenylalanine 5 to valine 25 traverse the membrane as a helical segment.

Belongs to the nanovirus U4 protein family.

The protein resides in the membrane. The sequence is that of Protein U4 (DNA-U4) from Faba bean necrotic yellows virus (isolate Egyptian EV1-93) (FBNYV).